A 387-amino-acid polypeptide reads, in one-letter code: 3-ketoacyl-CoA thiolase (387 aa).

The Acyl-thioester intermediate role is filled by Cys91. Residues His343 and Cys373 each act as proton acceptor in the active site.

Belongs to the thiolase-like superfamily. Thiolase family. Heterotetramer of two alpha chains (FadB) and two beta chains (FadA).

The protein localises to the cytoplasm. The catalysed reaction is an acyl-CoA + acetyl-CoA = a 3-oxoacyl-CoA + CoA. Its pathway is lipid metabolism; fatty acid beta-oxidation. Catalyzes the final step of fatty acid oxidation in which acetyl-CoA is released and the CoA ester of a fatty acid two carbons shorter is formed. Involved in the aerobic and anaerobic degradation of long-chain fatty acids. In Escherichia coli O6:H1 (strain CFT073 / ATCC 700928 / UPEC), this protein is 3-ketoacyl-CoA thiolase.